A 295-amino-acid polypeptide reads, in one-letter code: Ribosomal protein L11 methyltransferase (295 aa).

S-adenosyl-L-methionine contacts are provided by Thr-150, Gly-171, Asp-193, and Asn-232.

This sequence belongs to the methyltransferase superfamily. PrmA family.

It localises to the cytoplasm. The enzyme catalyses L-lysyl-[protein] + 3 S-adenosyl-L-methionine = N(6),N(6),N(6)-trimethyl-L-lysyl-[protein] + 3 S-adenosyl-L-homocysteine + 3 H(+). Functionally, methylates ribosomal protein L11. This is Ribosomal protein L11 methyltransferase from Neisseria meningitidis serogroup C / serotype 2a (strain ATCC 700532 / DSM 15464 / FAM18).